Here is an 82-residue protein sequence, read N- to C-terminus: MKLTCMMIVAVLFLTAWTFVTADDSRNGLENLSPKARHEMKNPEASKSNKRYECYSTGTFCGINGGLCCSNLCLFFVCLTFS.

A signal peptide spans 1–22; that stretch reads MKLTCMMIVAVLFLTAWTFVTA. A propeptide spanning residues 23-49 is cleaved from the precursor; it reads DDSRNGLENLSPKARHEMKNPEASKSN. Intrachain disulfides connect C54-C69, C61-C73, and C68-C78.

Belongs to the conotoxin O1 superfamily. In terms of tissue distribution, expressed by the venom duct.

The protein resides in the secreted. In terms of biological role, delta-conotoxins bind to site 6 of voltage-gated sodium channels (Nav) and inhibit the inactivation process. This chain is Delta-conotoxin-like CnVIA, found in Conus consors (Singed cone).